Consider the following 829-residue polypeptide: Telomere length regulation protein TEL2 homolog (829 aa).

Disordered stretches follow at residues 446–493 (SADF…DDLV) and 620–641 (SEKP…PHSI). A compositionally biased stretch (low complexity) spans 456–466 (SSPSKSPLSSP). Positions 467–480 (EVREKSKVKVKADQ) are enriched in basic and acidic residues. A compositionally biased stretch (acidic residues) spans 482 to 493 (SDSDLDSDDDLV). Residues 629-641 (AESGSVNTDPHSI) show a composition bias toward polar residues.

This sequence belongs to the TEL2 family.

It localises to the cytoplasm. The protein localises to the membrane. It is found in the nucleus. Its subcellular location is the chromosome. The protein resides in the telomere. In terms of biological role, regulator of the DNA damage response (DDR). Part of the TTT complex that is required to stabilize protein levels of the phosphatidylinositol 3-kinase-related protein kinase (PIKK) family proteins. Promotes assembly, stabilizes and maintains the activity of TORC complexes, which regulate cell growth and survival in response to nutrient and hormonal signals. May be involved in telomere length regulation. This Xenopus tropicalis (Western clawed frog) protein is Telomere length regulation protein TEL2 homolog (telo2).